The chain runs to 165 residues: CDP-archaeol synthase (165 aa).

4 helical membrane passes run 41-61 (GLIC…WLVG), 72-92 (ILSV…KSFI), 103-123 (AWPV…TIIF), and 127-147 (WFFA…TPVL).

It belongs to the CDP-archaeol synthase family. Mg(2+) serves as cofactor.

The protein localises to the cell membrane. It catalyses the reaction 2,3-bis-O-(geranylgeranyl)-sn-glycerol 1-phosphate + CTP + H(+) = CDP-2,3-bis-O-(geranylgeranyl)-sn-glycerol + diphosphate. It participates in membrane lipid metabolism; glycerophospholipid metabolism. Catalyzes the formation of CDP-2,3-bis-(O-geranylgeranyl)-sn-glycerol (CDP-archaeol) from 2,3-bis-(O-geranylgeranyl)-sn-glycerol 1-phosphate (DGGGP) and CTP. This reaction is the third ether-bond-formation step in the biosynthesis of archaeal membrane lipids. The polypeptide is CDP-archaeol synthase (Methanoregula boonei (strain DSM 21154 / JCM 14090 / 6A8)).